Consider the following 888-residue polypeptide: Glutamate receptor 3 (888 aa).

Residues 1–22 (MGQSVLRAVFFLVLGLLGHSHG) form the signal peptide. Residues 23–546 (GFPNTISIGG…GVFSFLDPLA (524 aa)) lie on the Extracellular side of the membrane. 5 N-linked (GlcNAc...) asparagine glycosylation sites follow: Asn-57, Asn-260, Asn-374, Asn-409, and Asn-416. Cys-85 and Cys-334 are oxidised to a cystine. Pro-502, Thr-504, and Arg-509 together coordinate L-glutamate. The chain crosses the membrane as a helical span at residues 547–567 (YEIWMCIVFAYIGVSVVLFLV). Residues 568–596 (SRFSPYEWHLEDNNEEPRDPQSPPDPPNE) are Cytoplasmic-facing. The helical; Pore-forming intramembrane region spans 597–612 (FGIFNSLWFSLGAFMQ). An intramembrane segment occupies 613-615 (QGC). Cys-615 carries the S-palmitoyl cysteine lipid modification. At 616–621 (DISPRS) the chain is on the cytoplasmic side. Residues 622 to 642 (LSGRIVGGVWWFFTLIIISSY) traverse the membrane as a helical segment. Residues 643-817 (TANLAAFLTV…DKTSALSLSN (175 aa)) lie on the Extracellular side of the membrane. Positions 680, 681, and 731 each coordinate L-glutamate. Cys-744 and Cys-799 form a disulfide bridge. Residues 818–838 (VAGVFYILVGGLGLAMMVALI) traverse the membrane as a helical segment. Topologically, residues 839 to 888 (EFCYKSRAESKRMKLTKNTQNFKPAPATNTQNYATYREGYNVYGTESVKI) are cytoplasmic. Residue Cys-841 is the site of S-palmitoyl cysteine attachment. 2 positions are modified to phosphotyrosine: Tyr-871 and Tyr-881.

The protein belongs to the glutamate-gated ion channel (TC 1.A.10.1) family. GRIA3 subfamily. Homotetramer or heterotetramer of pore-forming glutamate receptor subunits. Tetramers may be formed by the dimerization of dimers. Interacts with PICK1, GRIP1 and GRIP2. Found in a complex with GRIA1, GRIA2, GRIA4, CNIH2, CNIH3, CACNG2, CACNG3, CACNG4, CACNG5, CACNG7 and CACNG8. Interacts with CACNG5. Found in a complex with GRIA1, GRIA2, GRIA4, DLG4, CACNG8 and CNIH2.

The protein localises to the cell membrane. It localises to the postsynaptic cell membrane. Its subcellular location is the postsynaptic density membrane. It catalyses the reaction Ca(2+)(in) = Ca(2+)(out). Its function is as follows. Ionotropic glutamate receptor that functions as a ligand-gated cation channel, gated by L-glutamate and glutamatergic agonists such as alpha-amino-3-hydroxy-5-methyl-4-isoxazolepropionic acid (AMPA), quisqualic acid, and kainic acid. L-glutamate acts as an excitatory neurotransmitter at many synapses in the central nervous system and plays an important role in fast excitatory synaptic transmission by inducing long-term potentiation. Binding of the excitatory neurotransmitter L-glutamate induces a conformation change, leading to the opening of the cation channel, and thereby converts the chemical signal to an electrical impulse upon entry of calcium. The receptor then desensitizes rapidly and enters a transient inactive state, characterized by the presence of bound agonist. In the presence of CACNG8, shows resensitization which is characterized by a delayed accumulation of current flux upon continued application of glutamate. The polypeptide is Glutamate receptor 3 (Rattus norvegicus (Rat)).